Reading from the N-terminus, the 1526-residue chain is MKFLQKFIITVALLTNIVFAIDITENKVDRGSVTLSFGEIIIHPGASWSIIDNAFSNFIGKLDVKAKSALYISSTSHLLALQVSLTTLLHSINNSGIISFDSRVSLTPSSYDLRGLSFTNSGEMYFAASGRVPSTMSLTSASWTNTGLLSFYQNQRTSGAVCLGFPLGSITNSGKICLNNQVYQQTTQIKGSGCFSANGDSTIYIANVLLSVSANQNFHLVDKDSSMIVQAISTTQTFNVYGFGNGNKIGLTLPLIGIILESAHSYDSSTGILTLRNFLLEQRFNIGLGYDSSKFSVVTDSGSGIPSTIWGSVTYTGRVPTRALPKSCQMACKPIPEAPGVKPTDYTTTITKTNTAGNTVTETGAVTISTDKSGSWFTTTSIFPTLTTATSTSITTTLSNEAHIKTTDNTLAKVSSTVDYISAPISSSEFISLESFVDETLSNENPISTSTDYASENSFAISESTFITASDFQATESLVTESYFSKSQSSDSESFVINTSSAVDNSYVSSSSSAGGSSFPEETHMLQTSDSDLSSTAGSESDVTEFSDVSLATASDSSIADKSIGTESLYSEISLVSASESTGSIGELSISGDTLLKTASETKFVKSSFSSDLISETSSELFVSSSVSTDMILETANDSFITSDKVVETPSYSNELAFETVSETIINSFVSSESSLNTASNSLIASKPSTDSSSYTTDIDFETTTKSFAESPSYFSETVSEIASKSSLSMVEPSCWSELPFETSIESLIAPSYISSEPAPETASESFIVKPSYSEIASESITKSIISTIEASISSDIFSDATTGSIVVQPSVSSGISLEIPSESMLFSESSISKPFISSQSIHECTSDSILVVPSFFSSDVSFETVEYSSTVSTSVDAEPSYSSEISLKTPSESFIVSETFLEPSYSGEVVLATPSESVVASETDVNKPSYSNEAVLQTPSESYILSETGVKESSESSEFALSTPSTSFIASETFTVQSFASSEVSFGSDRESTISTEAIQVEPSISNDVVLETASESFISKAPTTSEFTILSETSIVEPSILSDLRFETTSQSTEMAPSATGVSYFSSTETPLASSSSYESSFATSSVSAIQSINSQVASASFVSADSTDSSEVGSSYTTASAFGPASSASEEKFISVWETSNSGGSFTLESSTSVASVVTTPLPFTSNDIITEISSTWNGAKSDSPHTSESDITSQYNSHSTSVATRSDSISLTDTFEIGFASTWTTGGSGNGGSMKSDVSNQDSYATMLPTSFLDTSNSDITTGVVSTWDAKNSNSYTSAELSTDPYSSDGYASSATAALSITESIPTTDTINTEYHSNGDITTSGGFKEISLTSHYEGGFTSESAGYTIASPSGSTQEFATATITSCFESKCSENVVTYISSVSHSTVTTGYEDTRFTGSIFSGDLASTGDNIVSASGRSVTDATNPFATNTDIGTTSTVSLYGDLNDSDSSVSGYPTNRSDSNGYANTPTTGSNTSGDFSQTIETGSSSFTAIPFENGSTNISNKYLKFLGTVVSILILLI.

The first 20 residues, M1–A20, serve as a signal peptide directing secretion. N-linked (GlcNAc...) asparagine glycans are attached at residues N93 and N498. Positions S512–S541 are disordered. Over residues M525–S541 the composition is skewed to polar residues. A glycan (N-linked (GlcNAc...) asparagine) is linked at N637. The interval W1180–A1207 is disordered. The span at S1193–A1207 shows a compositional bias: polar residues. 5 N-linked (GlcNAc...) asparagine glycosylation sites follow: N1451, N1463, N1479, N1502, and N1506. The disordered stretch occupies residues S1455–D1483. N1502 carries GPI-anchor amidated asparagine lipidation. Residues G1503–I1526 constitute a propeptide, removed in mature form.

It belongs to the HYR1/IFF family. The GPI-anchor is attached to the protein in the endoplasmic reticulum and serves to target the protein to the cell surface. There, the glucosamine-inositol phospholipid moiety is cleaved off and the GPI-$modified mannoprotein is covalently attached via its lipidless GPI glycan remnant to the 1,6-beta-glucan of the outer cell wall layer.

It localises to the secreted. Its subcellular location is the cell wall. It is found in the membrane. Functionally, GPI-anchored cell wall protein involved in cell wall organization, hyphal growth, as well as in host-fungal interaction and virulence. Plays a role in adherence to plastic and to host epithelial cells. Promotes the tissue fungal burden during murine vaginal candidiasis. Also increases susceptibility to neutrophil-mediated killing. Furthermore, contributes to the severity of hematogenously disseminated candidiasis in normal mice, but not in neutropenic mice. This Candida albicans (strain SC5314 / ATCC MYA-2876) (Yeast) protein is Cell wall protein IFF4 (IFF4).